The sequence spans 297 residues: 3-methyl-2-oxobutanoate hydroxymethyltransferase (297 aa).

Over residues M1–N12 the composition is skewed to polar residues. A disordered region spans residues M1–K36. Positions A22–P33 are enriched in low complexity. Residues D78 and D117 each contribute to the Mg(2+) site. 3-methyl-2-oxobutanoate contacts are provided by residues D78–S79, D117, and K147. E149 contributes to the Mg(2+) binding site. E215 serves as the catalytic Proton acceptor.

Belongs to the PanB family. As to quaternary structure, homodecamer; pentamer of dimers. It depends on Mg(2+) as a cofactor.

It localises to the cytoplasm. The catalysed reaction is 3-methyl-2-oxobutanoate + (6R)-5,10-methylene-5,6,7,8-tetrahydrofolate + H2O = 2-dehydropantoate + (6S)-5,6,7,8-tetrahydrofolate. The protein operates within cofactor biosynthesis; (R)-pantothenate biosynthesis; (R)-pantoate from 3-methyl-2-oxobutanoate: step 1/2. Catalyzes the reversible reaction in which hydroxymethyl group from 5,10-methylenetetrahydrofolate is transferred onto alpha-ketoisovalerate to form ketopantoate. This Mycobacterium ulcerans (strain Agy99) protein is 3-methyl-2-oxobutanoate hydroxymethyltransferase.